A 550-amino-acid chain; its full sequence is Putative golgin subfamily A member 6-like protein 19 (550 aa).

The span at 1-11 (MWPQPRLPPHP) shows a compositional bias: pro residues. The segment at 1-77 (MWPQPRLPPH…DSATGVYGEG (77 aa)) is disordered. Over residues 51-62 (NGSSPDTATSGG) the composition is skewed to polar residues. Residues 157–405 (SKVEQLQDET…QERLRQQDER (249 aa)) adopt a coiled-coil conformation. A compositionally biased stretch (basic and acidic residues) spans 467–480 (KELEKSGGAEEPRG). The segment at 467–529 (KELEKSGGAE…VGTGEAAGGA (63 aa)) is disordered. Composition is skewed to low complexity over residues 484-499 (AAAARPVPGAPVPQGA) and 517-529 (GEAVGTGEAAGGA).

The protein belongs to the GOLGA6 family.

The sequence is that of Putative golgin subfamily A member 6-like protein 19 (GOLGA6L19) from Homo sapiens (Human).